The chain runs to 398 residues: Acetate kinase 1 (398 aa).

Mg(2+) is bound at residue Asn-9. Position 16 (Lys-16) interacts with ATP. Arg-89 lines the substrate pocket. Asp-146 serves as the catalytic Proton donor/acceptor. ATP is bound by residues 206-210, 281-283, and 329-333; these read HLGNG, DCR, and GIGEN. Residue Glu-384 coordinates Mg(2+).

It belongs to the acetokinase family. As to quaternary structure, homodimer. Mg(2+) serves as cofactor. The cofactor is Mn(2+).

Its subcellular location is the cytoplasm. The enzyme catalyses acetate + ATP = acetyl phosphate + ADP. It functions in the pathway metabolic intermediate biosynthesis; acetyl-CoA biosynthesis; acetyl-CoA from acetate: step 1/2. Functionally, catalyzes the formation of acetyl phosphate from acetate and ATP. Can also catalyze the reverse reaction. The sequence is that of Acetate kinase 1 from Aliivibrio fischeri (strain ATCC 700601 / ES114) (Vibrio fischeri).